We begin with the raw amino-acid sequence, 230 residues long: 2,3-bisphosphoglycerate-dependent phosphoglycerate mutase (230 aa).

Residues 8–15 (RHGESEWN), 21–22 (TG), arginine 60, 87–90 (ERHY), lysine 98, 114–115 (RR), and 183–184 (GN) each bind substrate. The active-site Tele-phosphohistidine intermediate is histidine 9. The active-site Proton donor/acceptor is the glutamate 87.

Belongs to the phosphoglycerate mutase family. BPG-dependent PGAM subfamily.

The catalysed reaction is (2R)-2-phosphoglycerate = (2R)-3-phosphoglycerate. It participates in carbohydrate degradation; glycolysis; pyruvate from D-glyceraldehyde 3-phosphate: step 3/5. Functionally, catalyzes the interconversion of 2-phosphoglycerate and 3-phosphoglycerate. This Streptococcus gordonii (strain Challis / ATCC 35105 / BCRC 15272 / CH1 / DL1 / V288) protein is 2,3-bisphosphoglycerate-dependent phosphoglycerate mutase.